Here is a 144-residue protein sequence, read N- to C-terminus: 3-hydroxyacyl-[acyl-carrier-protein] dehydratase FabZ (144 aa).

The active site involves H48.

It belongs to the thioester dehydratase family. FabZ subfamily.

It is found in the cytoplasm. It catalyses the reaction a (3R)-hydroxyacyl-[ACP] = a (2E)-enoyl-[ACP] + H2O. Involved in unsaturated fatty acids biosynthesis. Catalyzes the dehydration of short chain beta-hydroxyacyl-ACPs and long chain saturated and unsaturated beta-hydroxyacyl-ACPs. The polypeptide is 3-hydroxyacyl-[acyl-carrier-protein] dehydratase FabZ (Bacillus thuringiensis (strain Al Hakam)).